Reading from the N-terminus, the 838-residue chain is Calmodulin-binding transcription activator 6 (838 aa).

Positions 25 to 134 (VQTMLEEAKS…YRDTQEAATT (110 aa)) form a DNA-binding region, CG-1. Residues 525-554 (QGWTALHWAAYYGREKMVAALLSAGARPNL) form an ANK repeat. 3 consecutive IQ domains span residues 671 to 700 (SIIA…IQCR), 713 to 742 (MRRQ…SVGV), and 788 to 817 (LERS…THEE). The segment at 738 to 760 (WSVGVLEKAVLRWRQKRKGFRGL) is calmodulin-binding. Residues 802-822 (KKAQQDYRRMKLTHEEAQVNH) adopt a coiled-coil conformation.

The protein belongs to the CAMTA family. As to expression, expressed in roots, stems, leaves, sepals, petals, stamen filaments, top of carpels, anthers and siliques, but not in stigmas.

It is found in the nucleus. Functionally, transcription activator that binds calmodulin in a calcium-dependent manner in vitro. Binds to the DNA consensus sequence 5'-[ACG]CGCG[GTC]-3'. Regulates transcriptional activity in response to calcium signals. The protein is Calmodulin-binding transcription activator 6 of Arabidopsis thaliana (Mouse-ear cress).